Consider the following 276-residue polypeptide: Large ribosomal subunit protein uL2 (276 aa).

Disordered stretches follow at residues 38 to 59 and 225 to 276; these read FQKS…GGHK and VMNP…RHKR. A compositionally biased stretch (polar residues) spans 39–49; sequence QKSGRNNNGHI. Basic residues predominate over residues 50 to 59; it reads TTRHKGGGHK.

Belongs to the universal ribosomal protein uL2 family. In terms of assembly, part of the 50S ribosomal subunit. Forms a bridge to the 30S subunit in the 70S ribosome.

Functionally, one of the primary rRNA binding proteins. Required for association of the 30S and 50S subunits to form the 70S ribosome, for tRNA binding and peptide bond formation. It has been suggested to have peptidyltransferase activity; this is somewhat controversial. Makes several contacts with the 16S rRNA in the 70S ribosome. This chain is Large ribosomal subunit protein uL2, found in Cupriavidus necator (strain ATCC 17699 / DSM 428 / KCTC 22496 / NCIMB 10442 / H16 / Stanier 337) (Ralstonia eutropha).